Consider the following 642-residue polypeptide: DNA gyrase subunit B (642 aa).

One can recognise a Toprim domain in the interval 422–536; it reads CELFIVEGDS…AGYVYIAQPP (115 aa). Mg(2+) is bound by residues E428, D501, and D503.

This sequence belongs to the type II topoisomerase family. In terms of assembly, heterotetramer, composed of two GyrA and two GyrB chains. Within the heterotetramer, GyrA contains the active site tyrosine that forms a covalent intermediate with the DNA, while GyrB contributes the cofactor binding sites and catalyzes ATP hydrolysis. It depends on Mg(2+) as a cofactor. The cofactor is Mn(2+). Requires Ca(2+) as cofactor.

The protein resides in the cytoplasm. The enzyme catalyses ATP-dependent breakage, passage and rejoining of double-stranded DNA.. Pyrrolopyrimidines inhibit both GyrB and its paralog in topoisomerase IV (parE). DNA gyrase negatively supercoils closed circular double-stranded DNA in an ATP-dependent manner and also catalyzes the interconversion of other topological isomers of double-stranded DNA rings, including catenanes and knotted rings. The sequence is that of DNA gyrase subunit B from Enterococcus faecalis (strain ATCC 700802 / V583).